A 455-amino-acid chain; its full sequence is tRNA modification GTPase MnmE (455 aa).

The (6S)-5-formyl-5,6,7,8-tetrahydrofolate site is built by R23, E85, and R124. The TrmE-type G domain occupies G220–I375. N230 is a binding site for K(+). GTP contacts are provided by residues N230–S235, T249–T255, and D274–G277. S234 serves as a coordination point for Mg(2+). The K(+) site is built by T249, V251, and T254. Mg(2+) is bound at residue T255. K455 serves as a coordination point for (6S)-5-formyl-5,6,7,8-tetrahydrofolate.

Belongs to the TRAFAC class TrmE-Era-EngA-EngB-Septin-like GTPase superfamily. TrmE GTPase family. In terms of assembly, homodimer. Heterotetramer of two MnmE and two MnmG subunits. It depends on K(+) as a cofactor.

The protein localises to the cytoplasm. Functionally, exhibits a very high intrinsic GTPase hydrolysis rate. Involved in the addition of a carboxymethylaminomethyl (cmnm) group at the wobble position (U34) of certain tRNAs, forming tRNA-cmnm(5)s(2)U34. The protein is tRNA modification GTPase MnmE of Geotalea uraniireducens (strain Rf4) (Geobacter uraniireducens).